A 1242-amino-acid chain; its full sequence is DNA polymerase catalytic subunit (1242 aa).

Disordered regions lie at residues 14–38 (GAVAGGRRQRSQPGSAQGSGKRPPQ), 644–665 (LQSAPSSQDGVSPGSGSNSSSS), 877–898 (EGDSEESSALPEGLETSSGGSN), and 1108–1163 (TAPQ…KPPS). The segment covering 653-665 (GVSPGSGSNSSSS) has biased composition (low complexity). Residues 1110–1119 (PQGSSDNGDS) are compositionally biased toward polar residues. Over residues 1145-1155 (ESNRRGGEPAK) the composition is skewed to basic and acidic residues.

It belongs to the DNA polymerase type-B family. Forms a complex with the ssDNA-binding protein UL57, the DNA polymerase processivity factor UL44, and the alkaline exonuclease UL98. Interacts with the putative helicase-primase complex composed of UL70, UL102 and UL105 proteins; these interactions may coordinate leading and lagging strand DNA synthesis at the replication fork.

The protein resides in the host nucleus. The enzyme catalyses DNA(n) + a 2'-deoxyribonucleoside 5'-triphosphate = DNA(n+1) + diphosphate. In terms of biological role, replicates viral genomic DNA in the late phase of lytic infection, producing long concatemeric DNA. The replication complex is composed of six viral proteins: the DNA polymerase, processivity factor, primase, primase-associated factor, helicase, and ssDNA-binding protein. The chain is DNA polymerase catalytic subunit (UL54) from Homo sapiens (Human).